The sequence spans 142 residues: Large ribosomal subunit protein uL13 (142 aa).

Belongs to the universal ribosomal protein uL13 family. Part of the 50S ribosomal subunit.

In terms of biological role, this protein is one of the early assembly proteins of the 50S ribosomal subunit, although it is not seen to bind rRNA by itself. It is important during the early stages of 50S assembly. This chain is Large ribosomal subunit protein uL13, found in Pseudomonas paraeruginosa (strain DSM 24068 / PA7) (Pseudomonas aeruginosa (strain PA7)).